The primary structure comprises 106 residues: Small ribosomal subunit protein mS33 (106 aa).

An N-acetylserine modification is found at Ser2. Residues 85-94 show a composition bias toward basic residues; it reads LKKLRGKVKP. The disordered stretch occupies residues 85–106; sequence LKKLRGKVKPRKGEGKRAAKKK. Residues 95–106 show a composition bias toward basic and acidic residues; the sequence is RKGEGKRAAKKK.

The protein belongs to the mitochondrion-specific ribosomal protein mS33 family. Component of the mitochondrial ribosome small subunit (28S) which comprises a 12S rRNA and about 30 distinct proteins.

It is found in the mitochondrion. In Bos taurus (Bovine), this protein is Small ribosomal subunit protein mS33.